The following is an 875-amino-acid chain: Alanine--tRNA ligase (875 aa).

Zn(2+) contacts are provided by His-564, His-568, Cys-666, and His-670.

This sequence belongs to the class-II aminoacyl-tRNA synthetase family. As to quaternary structure, homotetramer. It depends on Zn(2+) as a cofactor.

It localises to the cytoplasm. The enzyme catalyses tRNA(Ala) + L-alanine + ATP = L-alanyl-tRNA(Ala) + AMP + diphosphate. In terms of biological role, catalyzes the attachment of alanine to tRNA(Ala) in a two-step reaction: alanine is first activated by ATP to form Ala-AMP and then transferred to the acceptor end of tRNA(Ala). Also edits incorrectly charged Ser-tRNA(Ala) and Gly-tRNA(Ala) via its editing domain. The sequence is that of Alanine--tRNA ligase from Sodalis glossinidius (strain morsitans).